The sequence spans 879 residues: MKFMGANELREKYLSFFESKDHLRLQSFPLVPKNDKSLLLINAGMAPLKPYFTGLEEPPKRRITTCQKCIRTGDIENVGKTSRHGTFFEMLGNFSFGDYFKSEIIPWAWEFITETLGIPKDKLYVTIYLNDDEAYDIWTSKTDVDPSRIFRLGKDDNFWEIGVGPCGPCTEIHFDRGEGKVETVEEFLEASDADRIVEFWNLVFTQFDKDEEGNYNELAQKNIDTGMGLERIATIMQGVDNIFEIDTVKNILNKACELTNAKYGEDKDKDVSLRIITDHGKSVTFLICDGVQPSNEGRGYVLRRLLRRAARHGRLLGVKGIFLNEMVDAVVENYGEAYPELREKADYIKKIIKLEEERFNETIDSGMDILMSYISEMEEKNEKVLSGAKAFKLYDTYGFPLELTQEILEEKGLELDIENFNKEMKEQRERARNARGESSYMGSEESPVNKVDASIVTEFDGYVNLELNSKVIVLGNNEEFKAELKEGEEGFLLTDKTPFYAEMGGQVGDRGNITSETGMAIVTDCKKNVGGKFVHYIKVIEGSLKEGQEVKLSVDASRRSNICKNHTATHMLHEALKEVLGDHVNQSGSYVDEERLRFDFTHFAALTEEELEKVELLVNEKIMTVSVVDTKEMSLDEARNSGATCLFDEKYAEKVRVVSVGDFSKELCGGTHVANSGEIGLFKIVSESGVAAGIRRIEAVTGISALKFMELKNNMLKEAASMLKCNEKDIAKRIAAQAHELKEKDKEIAELKAKLVQGAEDDILKDKVEINGVELVTAELKDVDGNSLRDLADKVRNKLNNGIVVLASDNGGKVNLVAMATKNSLANGVHCGKVIKEVAAVVGGGGGGRPDMAQAGGKNPENIAKALEKAKEVVELLVK.

His-566, His-570, Cys-668, and His-672 together coordinate Zn(2+).

Belongs to the class-II aminoacyl-tRNA synthetase family. Requires Zn(2+) as cofactor.

The protein localises to the cytoplasm. It carries out the reaction tRNA(Ala) + L-alanine + ATP = L-alanyl-tRNA(Ala) + AMP + diphosphate. Functionally, catalyzes the attachment of alanine to tRNA(Ala) in a two-step reaction: alanine is first activated by ATP to form Ala-AMP and then transferred to the acceptor end of tRNA(Ala). Also edits incorrectly charged Ser-tRNA(Ala) and Gly-tRNA(Ala) via its editing domain. This is Alanine--tRNA ligase from Clostridium perfringens (strain 13 / Type A).